A 211-amino-acid chain; its full sequence is Probable nicotinate-nucleotide adenylyltransferase (211 aa).

The protein belongs to the NadD family.

It carries out the reaction nicotinate beta-D-ribonucleotide + ATP + H(+) = deamido-NAD(+) + diphosphate. Its pathway is cofactor biosynthesis; NAD(+) biosynthesis; deamido-NAD(+) from nicotinate D-ribonucleotide: step 1/1. In terms of biological role, catalyzes the reversible adenylation of nicotinate mononucleotide (NaMN) to nicotinic acid adenine dinucleotide (NaAD). This is Probable nicotinate-nucleotide adenylyltransferase from Legionella pneumophila (strain Lens).